The sequence spans 547 residues: Trigger factor-like protein TIG, Chloroplastic (547 aa).

The N-terminal 77 residues, 1 to 77 (MELCVISTTT…SHGGNFRLFA (77 aa)), are a transit peptide targeting the chloroplast. Residue Ala78 is modified to N-acetylalanine. Residues 271–366 (GDLAVVDISA…LFYRDLPTLD (96 aa)) form the PPIase FKBP-type domain.

This sequence belongs to the FKBP-type PPIase family. Tig subfamily.

The protein localises to the plastid. It localises to the chloroplast. It catalyses the reaction [protein]-peptidylproline (omega=180) = [protein]-peptidylproline (omega=0). Functionally, involved in protein export. Acts as a chaperone by maintaining the newly synthesized protein in an open conformation. Functions as a peptidyl-prolyl cis-trans isomerase. This Arabidopsis thaliana (Mouse-ear cress) protein is Trigger factor-like protein TIG, Chloroplastic (TIG).